Consider the following 471-residue polypeptide: Exoglucanase 2 (471 aa).

The N-terminal stretch at 1–18 (MIVGILTTLATLATLAAS) is a signal peptide. A propeptide spanning residues 19–24 (VPLEER) is cleaved from the precursor. Residue Q25 is modified to Pyrrolidone carboxylic acid. The region spanning 26 to 62 (ACSSVWGQCGGQNWSGPTCCASGSTCVYSNDYYSQCL) is the CBM1 domain. A compositionally biased stretch (low complexity) spans 64–101 (GAASSSSSTRAASTTSRVSPTTSRSSSATPPPGSTTTR). The interval 64–108 (GAASSSSSTRAASTTSRVSPTTSRSSSATPPPGSTTTRVPPVGSG) is disordered. A linker region spans residues 66-106 (ASSSSSTRAASTTSRVSPTTSRSSSATPPPGSTTTRVPPVG). A catalytic region spans residues 107–471 (SGTATYSGNP…LLTNANPSFL (365 aa)). O-linked (Man...) threonine glycosylation is found at T111 and T121. O-linked (Man...) serine glycans are attached at residues S130, S133, S134, and S139. T146 carries an O-linked (Man...) threonine glycan. Cysteines 200 and 259 form a disulfide. D245 (proton donor) is an active-site residue. Residue N313 is glycosylated (N-linked (GlcNAc) asparagine). A glycan (N-linked (GlcNAc...) (high mannose) asparagine) is linked at N334. C392 and C439 are joined by a disulfide.

It belongs to the glycosyl hydrolase 6 (cellulase B) family. In terms of processing, asn-334 contains mainly a high-mannose-type glycan (Hex(7-9)GlcNAc(2)) in a 3:1 ration with a single GlcNAc. Asn-313 was primarily unglycosylated with a small fraction (18%) bearing a single GlcNAc at this site.

Its subcellular location is the secreted. The enzyme catalyses Hydrolysis of (1-&gt;4)-beta-D-glucosidic linkages in cellulose and cellotetraose, releasing cellobiose from the non-reducing ends of the chains.. In terms of biological role, exocellobiohydrolases (CBH) that catalyzes the hydrolysis of 1,4-beta-D-glucosidic bonds in cellulose to release the disaccharide cellobiose. The degradation of cellulose involves an interplay between different cellulolytic enzymes. Hydrolysis starts with endoglucanases (EGs), which cut internal beta-1,4-glucosidic bonds in cellulose to reduce the polymerization degree of the substrate and create new chain ends for exocellobiohydrolases (CBHs). The CBHs release the disaccharide cellobiose from the non-reducing end of the cellulose polymer chain. Finally, beta-1,4-glucosidases hydrolyze the cellobiose and other short cello-oligosaccharides into glucose units. This Hypocrea jecorina (Trichoderma reesei) protein is Exoglucanase 2 (cbh2).